The sequence spans 242 residues: Small ribosomal subunit protein uS2 (242 aa).

It belongs to the universal ribosomal protein uS2 family.

This chain is Small ribosomal subunit protein uS2, found in Neisseria gonorrhoeae (strain ATCC 700825 / FA 1090).